We begin with the raw amino-acid sequence, 218 residues long: tRNA (guanine-N(7)-)-methyltransferase (218 aa).

Positions 1-25 are disordered; it reads MRLKNKPWANELVEEHPESALDRPN. The span at 13–25 shows a compositional bias: basic and acidic residues; sequence VEEHPESALDRPN. 4 residues coordinate S-adenosyl-L-methionine: glutamate 45, glutamate 70, aspartate 97, and aspartate 119. Residue aspartate 119 is part of the active site. Lysine 123 lines the substrate pocket. The tract at residues 125–130 is interaction with RNA; sequence RHEKRR. Substrate-binding positions include aspartate 155 and 195 to 198; that span reads TEYE.

The protein belongs to the class I-like SAM-binding methyltransferase superfamily. TrmB family.

The catalysed reaction is guanosine(46) in tRNA + S-adenosyl-L-methionine = N(7)-methylguanosine(46) in tRNA + S-adenosyl-L-homocysteine. The protein operates within tRNA modification; N(7)-methylguanine-tRNA biosynthesis. Its function is as follows. Catalyzes the formation of N(7)-methylguanine at position 46 (m7G46) in tRNA. In Lactobacillus delbrueckii subsp. bulgaricus (strain ATCC BAA-365 / Lb-18), this protein is tRNA (guanine-N(7)-)-methyltransferase.